The sequence spans 82 residues: Putative membrane protein insertion efficiency factor (82 aa).

The protein belongs to the UPF0161 family.

The protein resides in the cell inner membrane. Functionally, could be involved in insertion of integral membrane proteins into the membrane. In Rickettsia rickettsii (strain Iowa), this protein is Putative membrane protein insertion efficiency factor.